A 579-amino-acid chain; its full sequence is Nuclear hormone receptor family member nhr-22 (579 aa).

The nuclear receptor DNA-binding region spans 93-173 (SRSCHVCSSP…AGMRRELVQA (81 aa)). NR C4-type zinc fingers lie at residues 96 to 117 (CHVC…CKAC) and 133 to 161 (CIGT…FIKC). Residues 233 to 242 (LSPDPSSSQP) show a composition bias toward low complexity. Residues 233–256 (LSPDPSSSQPLDMTVTPPPLHRST) are disordered. In terms of domain architecture, NR LBD spans 304-577 (EVENKIFELV…SIMYDLLSFR (274 aa)).

It belongs to the nuclear hormone receptor family.

Its subcellular location is the nucleus. Its function is as follows. Orphan nuclear receptor. This Caenorhabditis elegans protein is Nuclear hormone receptor family member nhr-22 (nhr-22).